We begin with the raw amino-acid sequence, 272 residues long: MEYNPPNTRERIAARRQRLRQPSSEPAIPGWRRRFIDGLQSGRIVSGAVFVVSCLALFYVLFSSQFRVQTVEVVGVEFLSPERIVNAVPLRGWPIWLIDEEQAVAPLLRSPFVEHARLSLILPDRARIVIVERQPVIYWRSGGVDYLVDRQGFVIEPATVAPPADALVIVDSSNLPVEPQMQLDPDALALARELAWRLPNELGLRPAQIGWDFGLGVFIRTEQDQMVVFGRSERLTRKLMILAYLLNDGTPFTYLDLRPMNPFYQNRTDGRS.

At 1 to 43 (MEYNPPNTRERIAARRQRLRQPSSEPAIPGWRRRFIDGLQSGR) the chain is on the cytoplasmic side. A helical membrane pass occupies residues 44-64 (IVSGAVFVVSCLALFYVLFSS). Over 65 to 272 (QFRVQTVEVV…FYQNRTDGRS (208 aa)) the chain is Extracellular. A POTRA domain is found at 66-133 (FRVQTVEVVG…DRARIVIVER (68 aa)).

This sequence belongs to the FtsQ/DivIB family. FtsQ subfamily.

The protein resides in the cell membrane. Its function is as follows. Essential cell division protein. This chain is Cell division protein FtsQ, found in Chloroflexus aggregans (strain MD-66 / DSM 9485).